Consider the following 138-residue polypeptide: Basic phospholipase A2 Mtx-b (138 aa).

Positions 1-16 (MRALWIVAVLLVGVEG) are cleaved as a signal peptide. 7 disulfide bridges follow: Cys-42/Cys-131, Cys-44/Cys-60, Cys-59/Cys-111, Cys-65/Cys-138, Cys-66/Cys-104, Cys-73/Cys-97, and Cys-91/Cys-102. Residues Tyr-43, Gly-45, and Gly-47 each contribute to the Ca(2+) site. His-63 is a catalytic residue. Ca(2+) is bound at residue Asp-64. Asp-105 is an active-site residue.

In terms of assembly, heterodimer of an acidic subunit and a basic chain. The acidic subunit is non-toxic, without enzymatic activity and comprises 3 peptides that are cross-linked by 7 disulfide bridges. The basic subunit is toxic, has phospholipase A2 activity and is composed of a single chain. Ca(2+) is required as a cofactor. As to expression, expressed by the venom gland.

The protein localises to the secreted. It carries out the reaction a 1,2-diacyl-sn-glycero-3-phosphocholine + H2O = a 1-acyl-sn-glycero-3-phosphocholine + a fatty acid + H(+). Functionally, snake venom phospholipase A2 (PLA2) that inhibits neuromuscular transmission by blocking acetylcholine release from the nerve termini. PLA2 catalyzes the calcium-dependent hydrolysis of the 2-acyl groups in 3-sn-phosphoglycerides. The sequence is that of Basic phospholipase A2 Mtx-b from Crotalus scutulatus scutulatus (Mojave rattlesnake).